A 359-amino-acid chain; its full sequence is Nicotinate-nucleotide--dimethylbenzimidazole phosphoribosyltransferase (359 aa).

The Proton acceptor role is filled by Glu318.

Belongs to the CobT family. In terms of assembly, homodimer.

It carries out the reaction 5,6-dimethylbenzimidazole + nicotinate beta-D-ribonucleotide = alpha-ribazole 5'-phosphate + nicotinate + H(+). Its pathway is nucleoside biosynthesis; alpha-ribazole biosynthesis; alpha-ribazole from 5,6-dimethylbenzimidazole: step 1/2. In terms of biological role, catalyzes the synthesis of alpha-ribazole-5'-phosphate from nicotinate mononucleotide (NAMN) and 5,6-dimethylbenzimidazole (DMB). The chain is Nicotinate-nucleotide--dimethylbenzimidazole phosphoribosyltransferase from Shigella sonnei (strain Ss046).